The chain runs to 159 residues: Globin CTT-W (159 aa).

Residues M1–A16 form the signal peptide. Residues H17–E159 form the Globin domain. Positions 73 and 108 each coordinate heme b.

This sequence belongs to the globin family.

The sequence is that of Globin CTT-W (CTT-W) from Chironomus thummi piger (Midge).